The primary structure comprises 386 residues: Phosphatidyl-myo-inositol mannosyltransferase (386 aa).

GDP-alpha-D-mannose is bound by residues Y9 and G16. A 1,2-diacyl-sn-glycero-3-phospho-(1D-myo-inositol) is bound by residues Q18, 62–63, and R68; that span reads YN. Residues R196, 201–202, 251–253, K256, 274–278, and E282 contribute to the GDP-alpha-D-mannose site; these read RK, VDD, and ESFGI.

The protein belongs to the glycosyltransferase group 1 family. Glycosyltransferase 4 subfamily. Monomer. Mg(2+) serves as cofactor.

It localises to the cell membrane. It carries out the reaction a 1,2-diacyl-sn-glycero-3-phospho-(1D-myo-inositol) + GDP-alpha-D-mannose = a 1,2-diacyl-sn-glycero-3-phospho-[alpha-D-mannopyranosyl-(1&lt;-&gt;6)-D-myo-inositol] + GDP + H(+). It functions in the pathway phospholipid metabolism; phosphatidylinositol metabolism. Functionally, involved in the biosynthesis of phosphatidyl-myo-inositol mannosides (PIM) which are early precursors in the biosynthesis of lipomannans (LM) and lipoarabinomannans (LAM). Catalyzes the addition of a mannosyl residue from GDP-D-mannose (GDP-Man) to the position 2 of the carrier lipid phosphatidyl-myo-inositol (PI) to generate a phosphatidyl-myo-inositol bearing an alpha-1,2-linked mannose residue (PIM1). In contrary to PimB, the mannosyltransferase PimA is unable to transfer a mannose residue to the position 6 of the phosphatidyl-myo-inositol of PIM1. The sequence is that of Phosphatidyl-myo-inositol mannosyltransferase from Mycolicibacterium smegmatis (strain ATCC 700084 / mc(2)155) (Mycobacterium smegmatis).